The primary structure comprises 91 residues: Cell division protein FtsB (91 aa).

At 1–3 the chain is on the cytoplasmic side; it reads MRW. A helical membrane pass occupies residues 4-21; the sequence is PLIVLAVLVIVLQYPLWL. At 22 to 91 the chain is on the periplasmic side; that stretch reads GKGGWLRVWD…EIFVHTPRKP (70 aa). Residues 28–74 adopt a coiled-coil conformation; the sequence is RVWDVDRQLQAQRETNQRLEQRNAGLEAEVRDLKSGNEAVEERARFE.

It belongs to the FtsB family. As to quaternary structure, part of a complex composed of FtsB, FtsL and FtsQ.

The protein localises to the cell inner membrane. In terms of biological role, essential cell division protein. May link together the upstream cell division proteins, which are predominantly cytoplasmic, with the downstream cell division proteins, which are predominantly periplasmic. The protein is Cell division protein FtsB of Aromatoleum aromaticum (strain DSM 19018 / LMG 30748 / EbN1) (Azoarcus sp. (strain EbN1)).